A 591-amino-acid polypeptide reads, in one-letter code: MKKISLPKIGIRPVIDGRRMGVRESLEEQTMNMAKATAALITEKIRHACGAQVECVIADTCIAGMAESAACEEKFSSQNVGVTITVTPCWCYGSETIDMDPMRPKAIWGFNGTERPGAVYLAAALAAHSQKGIPAFSIYGHDVQDADDTSIPADVEEKLLRFARAGLAVASMKGKSYLSVGGVSMGIAGSIVDHNFFESWLGMKVQAVDMTELRRRIDQKIYDEAELEMALAWADKNFRYGEDQNASQYKRNEAQNRAVLKESLLMAMCIRDMMQGNKTLADKGLVEESLGYNAIAAGFQGQRHWTDQYPNGDTAEALLNSSFDWNGVREPFVVATENDSLNGVAMLFGHQLTGTAQIFADVRTYWSPEAVERVTGQALSALAEHGIIHLINSGSAALDGACKQRDSEGKPTMKPHWEISQQEADACLAATEWCPAIHEYFRGGGYSSRFLTEGGVPFTMTRVNIIKGLGPVLQIAEGWSVELPKAMHDQLDARTNSTWPTTWFAPRLIGKGPFTDVYSVMANWGANHGVLTIGHVGADFITLAAMLRIPVCMHNVEEAKIYRPSAWAAHGMDIEGQDYRACQNYGPLYKR.

Catalysis depends on proton acceptor residues Glu337 and Asp361. Mn(2+)-binding residues include Glu337, Asp361, and His528.

The protein belongs to the L-fucose isomerase family. Homohexamer. The cofactor is Mn(2+).

It is found in the cytoplasm. The enzyme catalyses L-fucose = L-fuculose. The protein operates within carbohydrate degradation; L-fucose degradation; L-lactaldehyde and glycerone phosphate from L-fucose: step 1/3. Converts the aldose L-fucose into the corresponding ketose L-fuculose. The chain is L-fucose isomerase from Salmonella typhi.